A 342-amino-acid chain; its full sequence is Anthranilate phosphoribosyltransferase (342 aa).

Residues glycine 83, 86–87 (GD), threonine 91, 93–96 (NIST), 111–119 (KHGNRGVSS), and serine 123 contribute to the 5-phospho-alpha-D-ribose 1-diphosphate site. Residue glycine 83 participates in anthranilate binding. Mg(2+) is bound at residue serine 95. Position 114 (asparagine 114) interacts with anthranilate. Position 169 (arginine 169) interacts with anthranilate. Residues aspartate 228 and glutamate 229 each contribute to the Mg(2+) site.

This sequence belongs to the anthranilate phosphoribosyltransferase family. In terms of assembly, homodimer. Requires Mg(2+) as cofactor.

The enzyme catalyses N-(5-phospho-beta-D-ribosyl)anthranilate + diphosphate = 5-phospho-alpha-D-ribose 1-diphosphate + anthranilate. Its pathway is amino-acid biosynthesis; L-tryptophan biosynthesis; L-tryptophan from chorismate: step 2/5. Functionally, catalyzes the transfer of the phosphoribosyl group of 5-phosphorylribose-1-pyrophosphate (PRPP) to anthranilate to yield N-(5'-phosphoribosyl)-anthranilate (PRA). The polypeptide is Anthranilate phosphoribosyltransferase (Paraburkholderia phymatum (strain DSM 17167 / CIP 108236 / LMG 21445 / STM815) (Burkholderia phymatum)).